Consider the following 144-residue polypeptide: Transcriptional regulator SlyA (144 aa).

Residues 2-135 form the HTH marR-type domain; that stretch reads ESPLGSDLSR…LSQMISKLEK (134 aa). Positions 49–72 form a DNA-binding region, H-T-H motif; that stretch reads QIQLAKAIGIEQPSLVRTLDQLEE.

This sequence belongs to the SlyA family. Homodimer.

Functionally, transcription regulator that can specifically activate or repress expression of target genes. This chain is Transcriptional regulator SlyA, found in Wigglesworthia glossinidia brevipalpis.